A 144-amino-acid polypeptide reads, in one-letter code: Large ribosomal subunit protein uL15 (144 aa).

Residues 1-53 (MRLNTLSPAEGSKHASKRPGRGIGSGLGKTGGRGHKGQKSRSGGGVRRGFEGG) form a disordered region. Residues 21–31 (RGIGSGLGKTG) are compositionally biased toward gly residues.

The protein belongs to the universal ribosomal protein uL15 family. Part of the 50S ribosomal subunit.

Its function is as follows. Binds to the 23S rRNA. This chain is Large ribosomal subunit protein uL15, found in Sodalis glossinidius (strain morsitans).